A 465-amino-acid chain; its full sequence is Chromosomal replication initiator protein DnaA (465 aa).

The domain I, interacts with DnaA modulators stretch occupies residues 1–85 (MSGFWESCLQ…IALVIGSGKA (85 aa)). A domain II region spans residues 85–129 (ATAARIQATTTDSGQNAPANPATTSEKRTAASEKARGKGSNYEKS). The segment covering 93 to 108 (TTTDSGQNAPANPATT) has biased composition (polar residues). Residues 93 to 125 (TTTDSGQNAPANPATTSEKRTAASEKARGKGSN) form a disordered region. Residues 109-125 (SEKRTAASEKARGKGSN) are compositionally biased toward basic and acidic residues. The domain III, AAA+ region stretch occupies residues 130-346 (RLFPSFTFDN…GALKKVLAYS (217 aa)). Positions 174, 176, 177, and 178 each coordinate ATP. Residues 347–465 (SFHGRVIALD…LHVLLQVLKG (119 aa)) form a domain IV, binds dsDNA region.

It belongs to the DnaA family. As to quaternary structure, oligomerizes as a right-handed, spiral filament on DNA at oriC.

Its subcellular location is the cytoplasm. Functionally, plays an essential role in the initiation and regulation of chromosomal replication. ATP-DnaA binds to the origin of replication (oriC) to initiate formation of the DNA replication initiation complex once per cell cycle. Binds the DnaA box (a 9 base pair repeat at the origin) and separates the double-stranded (ds)DNA. Forms a right-handed helical filament on oriC DNA; dsDNA binds to the exterior of the filament while single-stranded (ss)DNA is stabiized in the filament's interior. The ATP-DnaA-oriC complex binds and stabilizes one strand of the AT-rich DNA unwinding element (DUE), permitting loading of DNA polymerase. After initiation quickly degrades to an ADP-DnaA complex that is not apt for DNA replication. Binds acidic phospholipids. In Dechloromonas aromatica (strain RCB), this protein is Chromosomal replication initiator protein DnaA.